The sequence spans 515 residues: Anterior pharynx in excess protein 1 (515 aa).

A signal peptide spans 1 to 26 (MTNFSSLLTTIFLCIISSATGSGTIE). Topologically, residues 27–392 (LLISSPQTVL…QASDELQLRL (366 aa)) are extracellular. Asn123 carries N-linked (GlcNAc...) asparagine glycosylation. Residues 130–172 (NLCSSNYHGKRCNRYCIANAKLHWECSTHGVRRCSAGWSGEDC) enclose the DSL domain. 14 disulfides stabilise this stretch: Cys132-Cys141, Cys145-Cys155, Cys163-Cys172, Cys177-Cys187, Cys181-Cys193, Cys195-Cys204, Cys213-Cys218, Cys228-Cys237, Cys244-Cys256, Cys250-Cys268, Cys270-Cys279, Cys288-Cys300, Cys294-Cys310, and Cys312-Cys321. EGF-like domains follow at residues 173–205 (SNPICAGGCSNRGRCVAPNQCSCADGFNGTRCE), 203–238 (RCEQCLPRAGCVNGDCVNETPNTCKCRDGFIGDRCD), 240–280 (DIKI…SQCK), and 284–322 (SKVRCSAEHVCKNGGACISMDDTNIQCKCRRGFSGKFCE). An N-linked (GlcNAc...) asparagine glycan is attached at Asn200. One can recognise an EGF-like 5; incomplete domain in the interval 325–349 (NHGDCSAMRCSAGETCQISGDFAIC). A helical transmembrane segment spans residues 393–413 (IAAICVLFSVCVIGLALVSFF). Residues 414 to 515 (FYMHSFSKWK…AADDESSFRV (102 aa)) are Cytoplasmic-facing. 2 disordered regions span residues 427 to 452 (SQQAGGSTILPTTTSIPMSTTSSGTG) and 466 to 494 (RGNAPGSSSDSEPDHHCPPPHRHSPPPAY). Residues 431–452 (GGSTILPTTTSIPMSTTSSGTG) are compositionally biased toward low complexity.

The protein resides in the cell membrane. It localises to the nucleus. It is found in the cytoplasm. In terms of biological role, probable ligand for lin-12/Notch and glp-1/Notch receptors and involved in the mediation of Notch signaling. Involved in the lin-12/Notch pathway signaling of cell fate in vulval precursor cells (VPCs), acting redundantly with dsl-1 and lag-2. Contributes to the establishment of the dorsal-ventral axis in early embryos. Involved in the specification of the blastomere cell ABp fate, probably acting as a signal from the P2 blastomere to the glp-1/Notch receptor on ABp and ABa. Probably acts as a signal, from the secondary vulval epithelial cells and the vulval muscle type 1 (vm1) cells, to activate the lin-12/Notch pathway in type 2 vulval muscle (vm2) cells, contributing to formation of the postsynaptic muscle plasma membrane extensions, known as muscle arms. Required for oocyte growth control, acting redundantly with lag-2, perhaps signaling via the glp-1/Notch pathway. Plays a somatic role in ovulation during adulthood, perhaps via lin-12/Notch signaling. Involved in establishing left-right asymmetry during intestinal organogenesis. The chain is Anterior pharynx in excess protein 1 (apx-1) from Caenorhabditis elegans.